Reading from the N-terminus, the 321-residue chain is Annexin D3 (321 aa).

Alanine 2 is subject to N-acetylalanine. 4 Annexin repeats span residues 11 to 82, 83 to 159, 171 to 243, and 247 to 318; these read PSPA…SWTY, DPAE…TLAS, EVAT…VAIF, and TPEK…TLLG. 3 residues coordinate Ca(2+): glycine 26, glycine 28, and glutamate 68. The residue at position 117 (threonine 117) is a Phosphothreonine. Ca(2+)-binding residues include isoleucine 260 and glycine 264. Phosphotyrosine is present on tyrosine 289. Aspartate 304 lines the Ca(2+) pocket.

Belongs to the annexin (TC 1.A.31.1) family. In terms of tissue distribution, expressed mainly in roots and flowers. Lower in stems and leaves.

This is Annexin D3 (ANN3) from Arabidopsis thaliana (Mouse-ear cress).